Reading from the N-terminus, the 154-residue chain is Myoglobin (154 aa).

In terms of domain architecture, Globin spans 2 to 148; it reads GLSDGEWQLV…FRNDMAAKYK (147 aa). The residue at position 4 (Ser4) is a Phosphoserine. His65 serves as a coordination point for nitrite. An O2-binding site is contributed by His65. Thr68 is subject to Phosphothreonine. Residue His94 coordinates heme b.

The protein belongs to the globin family. In terms of assembly, monomeric.

It localises to the cytoplasm. It is found in the sarcoplasm. The catalysed reaction is Fe(III)-heme b-[protein] + nitric oxide + H2O = Fe(II)-heme b-[protein] + nitrite + 2 H(+). It catalyses the reaction H2O2 + AH2 = A + 2 H2O. Its function is as follows. Monomeric heme protein which primary function is to store oxygen and facilitate its diffusion within muscle tissues. Reversibly binds oxygen through a pentacoordinated heme iron and enables its timely and efficient release as needed during periods of heightened demand. Depending on the oxidative conditions of tissues and cells, and in addition to its ability to bind oxygen, it also has a nitrite reductase activity whereby it regulates the production of bioactive nitric oxide. Under stress conditions, like hypoxia and anoxia, it also protects cells against reactive oxygen species thanks to its pseudoperoxidase activity. In Macaca fascicularis (Crab-eating macaque), this protein is Myoglobin (MB).